The following is a 216-amino-acid chain: 3-keto-L-gulonate-6-phosphate decarboxylase UlaD (216 aa).

Asp-11 provides a ligand contact to substrate. Mg(2+)-binding residues include Glu-33 and Asp-62. Arg-192 serves as a coordination point for substrate.

It belongs to the HPS/KGPDC family. KGPDC subfamily. As to quaternary structure, homodimer. Mg(2+) is required as a cofactor.

The catalysed reaction is 3-dehydro-L-gulonate 6-phosphate + H(+) = L-xylulose 5-phosphate + CO2. The protein operates within cofactor degradation; L-ascorbate degradation; D-xylulose 5-phosphate from L-ascorbate: step 2/4. Its function is as follows. Catalyzes the decarboxylation of 3-keto-L-gulonate-6-P into L-xylulose-5-P. Is involved in the anaerobic L-ascorbate utilization. This Shigella dysenteriae serotype 1 (strain Sd197) protein is 3-keto-L-gulonate-6-phosphate decarboxylase UlaD.